Reading from the N-terminus, the 725-residue chain is MVLTILFSAYKLCRFFAMSSPRPGAERLAVPGPDGGGGAGPWWTAGGRGPREVSPGVGAEVQGALERALPELQQALSALKQAGGGRAVGAGLAEVFQLVEEAWLLPAMGREVAQGLCDAIRLEGGLDLLLRLLQAPELETRVQAARLLEQILVAENRRDRVARIGLGVILNLAKEREPVELARSVAGILEHMFKHSEETCQRLVAAGGLDAVLYWCRRTDPALLRHCALALANCAMHGGQAAQRRMVEKRAAEWLFPLAFSKEDELLRLHACLAVAVLATNKEVEREVERSGTLALVEPLVASLDPGRFARCLVDASDTSQGRGPDDLQRLVPLLDSSRMEAQCIGAFYLCAEAVIMHIKNRNKVFSDIGAIQSLKRLVSYSTNGTTSALAKRALRLLGEEVPRPILPCVASWKEAEVQTWLQQIGFSQYCESFREQQVDGDLLLRLTEEELQTDLGMKSGITRKRFFRELTELKTFANYATCDRSNLADWLGSLDPRFRQYTYGLVSCGLDRSLLHRVSEQQLLEDCGIRLGVHRVRILTAAREMLHSPLPCTGSKPSGDVPDVFISYRRNSGSQLASLLKVHLQLHGFSVFIDVEKLEAGKFEDKLIQSIMSARNFVLVLSAGALDKCMQDHDCKDWVHKEIVTALSCGKNIVPVIDGFEWPEPHTLPEDMQAVLTFNGIKWSHEYQEATIEKIIRFLQGRSSRDSSAGSDTSLEGAAPMGPT.

The N-terminal 27 residues, 1–27 (MVLTILFSAYKLCRFFAMSSPRPGAER), are a transit peptide targeting the mitochondrion. The stretch at 60–100 (EVQGALERALPELQQALSALKQAGGGRAVGAGLAEVFQLVE) is one ARM 1 repeat. NAD(+)-binding positions include W103, R110, 149–158 (EQILVAENRR), and 191–194 (HMFK). ARM repeat units follow at residues 114–153 (QGLC…QILV), 155–194 (ENRR…HMFK), 197–236 (EETC…NCAM), 238–281 (GGQA…LATN), 282–315 (KEVE…CLVD), 316–355 (ASDT…AEAV), and 360–403 (KNRN…EEVP). SAM domains lie at 413-477 (WKEA…LKTF) and 483-549 (CDRS…MLHS). A phosphoserine mark is found at S549 and S559. Positions 561–704 (DVPDVFISYR…KIIRFLQGRS (144 aa)) constitute a TIR domain. NAD(+)-binding positions include 570–571 (RR) and E600. The active site involves E643. Residues 705 to 725 (SRDSSAGSDTSLEGAAPMGPT) are disordered.

It belongs to the SARM1 family. In terms of assembly, homooctamer; forms an octameric ring via SAM domains. Interacts with TICAM1/TRIF and thereby interferes with TICAM1/TRIF function. Interacts with MAPK10/JNK3 and SDC2 (via cytoplasmic domain). Phosphorylation at Ser-549 by JNK kinases (MAPK8, MAPK9 and /or MAPK10) enhance the NAD(+) hydrolase (NADase) activity. Phosphorylation at Ser-549 and subsequent activation takes place in response to oxidative stress conditions and inhibits mitochondrial respiration. As to expression, highest expression seen in the spleen and the brain, followed by lung, kidney, liver and other tissues.

It localises to the cytoplasm. It is found in the cell projection. The protein resides in the axon. Its subcellular location is the dendrite. The protein localises to the synapse. It localises to the mitochondrion. It carries out the reaction NAD(+) + H2O = ADP-D-ribose + nicotinamide + H(+). It catalyses the reaction NAD(+) = cyclic ADP-beta-D-ribose + nicotinamide + H(+). The enzyme catalyses NADP(+) + H2O = ADP-D-ribose 2'-phosphate + nicotinamide + H(+). Its activity is regulated as follows. Autoinhibited: in the inactive state, the enzymatic TIR domain is held apart by the autoinhibiting ARM repeats. NAD(+)-binding to ARM repeats maintains an inactive state by promoting interaction between ARM repeats and the TIR domain, thereby facilitating inhibition of the enzymatic TIR domain. Following activation, possibly by nicotinamide mononucleotide (NMN), auto-inhibitory interactions are released, allowing self-association of the TIR domains and subsequent activation of the NAD(+) hydrolase (NADase) activity. Self-association of TIR domains is facilitated by the octamer of SAM domains. Its function is as follows. NAD(+) hydrolase, which plays a key role in axonal degeneration following injury by regulating NAD(+) metabolism. Acts as a negative regulator of MYD88- and TRIF-dependent toll-like receptor signaling pathway by promoting Wallerian degeneration, an injury-induced form of programmed subcellular death which involves degeneration of an axon distal to the injury site. Wallerian degeneration is triggered by NAD(+) depletion: in response to injury, SARM1 is activated and catalyzes cleavage of NAD(+) into ADP-D-ribose (ADPR), cyclic ADPR (cADPR) and nicotinamide; NAD(+) cleavage promoting cytoskeletal degradation and axon destruction. Also able to hydrolyze NADP(+), but not other NAD(+)-related molecules. Can activate neuronal cell death in response to stress. Regulates dendritic arborization through the MAPK4-JNK pathway. Involved in innate immune response: inhibits both TICAM1/TRIF- and MYD88-dependent activation of JUN/AP-1, TRIF-dependent activation of NF-kappa-B and IRF3, and the phosphorylation of MAPK14/p38. This is NAD(+) hydrolase SARM1 from Sus scrofa (Pig).